A 199-amino-acid chain; its full sequence is MRLTLQHITRLKVLLHLAGFLPLLWLILSVDQGWFSADPAKDIQHFTGRMALKLLLATLLVTPLARYGKQPLLIRCRRLLGLWCFFWATLHLVSYALLELGLDHLALLGKELISRPYLTLGVISWLILLALAVTSPQIMMRKLGSQWQKLHNFVYLVAILAPIHYLWSVKTLSPQPILYALAALILLLFRYKKFRQWWR.

The next 5 helical transmembrane spans lie at 13–33 (VLLH…VDQG), 79–99 (LLGL…ALLE), 120–140 (LGVI…QIMM), 147–167 (WQKL…HYLW), and 169–189 (VKTL…LLLF).

This sequence belongs to the MsrQ family. Heterodimer of a catalytic subunit (MsrP) and a heme-binding subunit (MsrQ). It depends on FMN as a cofactor. Heme b is required as a cofactor.

It is found in the cell inner membrane. Part of the MsrPQ system that repairs oxidized periplasmic proteins containing methionine sulfoxide residues (Met-O), using respiratory chain electrons. Thus protects these proteins from oxidative-stress damage caused by reactive species of oxygen and chlorine generated by the host defense mechanisms. MsrPQ is essential for the maintenance of envelope integrity under bleach stress, rescuing a wide series of structurally unrelated periplasmic proteins from methionine oxidation. MsrQ provides electrons for reduction to the reductase catalytic subunit MsrP, using the quinone pool of the respiratory chain. In Pectobacterium carotovorum subsp. carotovorum (strain PC1), this protein is Protein-methionine-sulfoxide reductase heme-binding subunit MsrQ.